The primary structure comprises 844 residues: RPA-related protein RADX (844 aa).

Positions 228-331 (WHNRKNFPAL…LISTMEICLN (104 aa)) form a DNA-binding region, OB. Disordered regions lie at residues 571-609 (PASE…RPMD) and 626-664 (GPTA…TGKS). Over residues 572-587 (ASETLQNASPPSTSQA) the composition is skewed to polar residues. Positions 590-608 (KEGHYHERGSKRSQDDRPM) are enriched in basic and acidic residues. A compositionally biased stretch (polar residues) spans 652–662 (SRENSTANATG).

The protein resides in the chromosome. Functionally, single-stranded DNA-binding protein recruited to replication forks to maintain genome stability. Prevents fork collapse by antagonizing the accumulation of RAD51 at forks to ensure the proper balance of fork remodeling and protection without interfering with the capacity of cells to complete homologous recombination of double-strand breaks. The protein is RPA-related protein RADX of Rattus norvegicus (Rat).